A 413-amino-acid chain; its full sequence is Exodeoxyribonuclease 7 large subunit (413 aa).

Belongs to the XseA family. In terms of assembly, heterooligomer composed of large and small subunits.

It localises to the cytoplasm. It catalyses the reaction Exonucleolytic cleavage in either 5'- to 3'- or 3'- to 5'-direction to yield nucleoside 5'-phosphates.. Bidirectionally degrades single-stranded DNA into large acid-insoluble oligonucleotides, which are then degraded further into small acid-soluble oligonucleotides. This is Exodeoxyribonuclease 7 large subunit from Corynebacterium efficiens (strain DSM 44549 / YS-314 / AJ 12310 / JCM 11189 / NBRC 100395).